The following is a 574-amino-acid chain: Ribonuclease Y (574 aa).

The helical transmembrane segment at Met1–Leu21 threads the bilayer. Positions Ala264–Leu327 constitute a KH domain. In terms of domain architecture, HD spans Val390 to Ala483.

It belongs to the RNase Y family.

It localises to the cell membrane. In terms of biological role, endoribonuclease that initiates mRNA decay. This chain is Ribonuclease Y, found in Thermus thermophilus (strain ATCC 27634 / DSM 579 / HB8).